We begin with the raw amino-acid sequence, 331 residues long: Tryptophan--tRNA ligase (331 aa).

Residues Q10–S12 and G18–N19 each bind ATP. The short motif at P11–N19 is the 'HIGH' region element. L-tryptophan is bound at residue D133. Residues G145–D147, V184, and K193–S197 each bind ATP. Positions K193–S197 match the 'KMSKS' region motif.

It belongs to the class-I aminoacyl-tRNA synthetase family. Homodimer.

It is found in the cytoplasm. It catalyses the reaction tRNA(Trp) + L-tryptophan + ATP = L-tryptophyl-tRNA(Trp) + AMP + diphosphate + H(+). In terms of biological role, catalyzes the attachment of tryptophan to tRNA(Trp). The polypeptide is Tryptophan--tRNA ligase (Listeria innocua serovar 6a (strain ATCC BAA-680 / CLIP 11262)).